Consider the following 336-residue polypeptide: Fimbrial adhesin PapGII (336 aa).

The signal sequence occupies residues 1-20 (MKKWFPALLFSLCVSGESSA). 2 disulfides stabilise this stretch: C64–C138 and C217–C249. D-galactose-binding positions include E79 and 124-127 (GYKW).

This sequence belongs to the adhesin PapG family.

The protein localises to the secreted. Its subcellular location is the fimbrium. Functionally, tip adhesin component of type P pili that plays a critical role in kidney infection through targeted interaction with the globoseries glycolipids containing the Gal-alpha(1-4)-Gal disaccharide present on uroepithelial cells. In turn, transcriptionally regulates host gene expression in kidney cells, leading to inflammatory pathway activation and renal tissue damage. Acts thereby as key determinant of invasive uropathogenic E.coli (UPEC), which cause pyelonephritis and urinary-source bacteremia. This chain is Fimbrial adhesin PapGII, found in Escherichia coli.